The following is a 336-amino-acid chain: N-acetyl-gamma-glutamyl-phosphate reductase (336 aa).

Residue Cys-144 is part of the active site.

Belongs to the NAGSA dehydrogenase family. Type 1 subfamily.

Its subcellular location is the cytoplasm. It catalyses the reaction N-acetyl-L-glutamate 5-semialdehyde + phosphate + NADP(+) = N-acetyl-L-glutamyl 5-phosphate + NADPH + H(+). The protein operates within amino-acid biosynthesis; L-arginine biosynthesis; N(2)-acetyl-L-ornithine from L-glutamate: step 3/4. Its function is as follows. Catalyzes the NADPH-dependent reduction of N-acetyl-5-glutamyl phosphate to yield N-acetyl-L-glutamate 5-semialdehyde. The protein is N-acetyl-gamma-glutamyl-phosphate reductase of Methanosarcina acetivorans (strain ATCC 35395 / DSM 2834 / JCM 12185 / C2A).